Here is a 156-residue protein sequence, read N- to C-terminus: Small ribosomal subunit protein uS7 (156 aa).

Belongs to the universal ribosomal protein uS7 family. In terms of assembly, part of the 30S ribosomal subunit. Contacts proteins S9 and S11.

Its function is as follows. One of the primary rRNA binding proteins, it binds directly to 16S rRNA where it nucleates assembly of the head domain of the 30S subunit. Is located at the subunit interface close to the decoding center, probably blocks exit of the E-site tRNA. The sequence is that of Small ribosomal subunit protein uS7 from Jannaschia sp. (strain CCS1).